Here is a 199-residue protein sequence, read N- to C-terminus: ATP synthase subunit a (199 aa).

The next 5 helical transmembrane spans lie at 2–22, 53–73, 80–100, 141–161, and 169–189; these read NQVYFLDIFMFVFVLQFLFYF, VISVFTFIILLTCCFGGYFTY, MVEFTFVYAAVAWLSTLLTFI, LTVNIMVGHLISMMLYQGLEL, and WLSIFAIMMECFVFFIQSYIF.

Belongs to the ATPase A chain family. F-type ATPases have 2 components, CF(1) - the catalytic core - and CF(0) - the membrane proton channel. CF(1) has five subunits: alpha(3), beta(3), gamma(1), delta(1), epsilon(1). CF(0) has three main subunits: a, b and c.

The protein resides in the mitochondrion inner membrane. Its function is as follows. Mitochondrial membrane ATP synthase (F(1)F(0) ATP synthase or Complex V) produces ATP from ADP in the presence of a proton gradient across the membrane which is generated by electron transport complexes of the respiratory chain. F-type ATPases consist of two structural domains, F(1) - containing the extramembraneous catalytic core and F(0) - containing the membrane proton channel, linked together by a central stalk and a peripheral stalk. During catalysis, ATP synthesis in the catalytic domain of F(1) is coupled via a rotary mechanism of the central stalk subunits to proton translocation. Key component of the proton channel; it may play a direct role in the translocation of protons across the membrane. The protein is ATP synthase subunit a (atp6) of Caenorhabditis briggsae.